A 342-amino-acid polypeptide reads, in one-letter code: Porphobilinogen deaminase (342 aa).

Cys-249 bears the S-(dipyrrolylmethanemethyl)cysteine mark. Residues Ala-323–Glu-342 form a disordered region.

This sequence belongs to the HMBS family. In terms of assembly, monomer. The cofactor is dipyrromethane.

It carries out the reaction 4 porphobilinogen + H2O = hydroxymethylbilane + 4 NH4(+). The protein operates within porphyrin-containing compound metabolism; protoporphyrin-IX biosynthesis; coproporphyrinogen-III from 5-aminolevulinate: step 2/4. In terms of biological role, tetrapolymerization of the monopyrrole PBG into the hydroxymethylbilane pre-uroporphyrinogen in several discrete steps. The chain is Porphobilinogen deaminase from Paraburkholderia phytofirmans (strain DSM 17436 / LMG 22146 / PsJN) (Burkholderia phytofirmans).